Consider the following 475-residue polypeptide: Aspartyl/glutamyl-tRNA(Asn/Gln) amidotransferase subunit B (475 aa).

Belongs to the GatB/GatE family. GatB subfamily. Heterotrimer of A, B and C subunits.

It catalyses the reaction L-glutamyl-tRNA(Gln) + L-glutamine + ATP + H2O = L-glutaminyl-tRNA(Gln) + L-glutamate + ADP + phosphate + H(+). It carries out the reaction L-aspartyl-tRNA(Asn) + L-glutamine + ATP + H2O = L-asparaginyl-tRNA(Asn) + L-glutamate + ADP + phosphate + 2 H(+). In terms of biological role, allows the formation of correctly charged Asn-tRNA(Asn) or Gln-tRNA(Gln) through the transamidation of misacylated Asp-tRNA(Asn) or Glu-tRNA(Gln) in organisms which lack either or both of asparaginyl-tRNA or glutaminyl-tRNA synthetases. The reaction takes place in the presence of glutamine and ATP through an activated phospho-Asp-tRNA(Asn) or phospho-Glu-tRNA(Gln). This Thermoanaerobacter pseudethanolicus (strain ATCC 33223 / 39E) (Clostridium thermohydrosulfuricum) protein is Aspartyl/glutamyl-tRNA(Asn/Gln) amidotransferase subunit B.